The primary structure comprises 350 residues: Small ribosomal subunit biogenesis GTPase RsgA (350 aa).

Positions 1 to 17 (MSKNKLSKGQQRRVQAN) are enriched in polar residues. Positions 1–35 (MSKNKLSKGQQRRVQANHQRRLRTDRKPELDDSQL) are disordered. The 171-residue stretch at 103-273 (TSVLTRPDLY…VIDSPGVREF (171 aa)) folds into the CP-type G domain. Residues 159–162 (NKID) and 213–221 (GQSGVGKSS) contribute to the GTP site. The Zn(2+) site is built by C297, C302, H304, and C310.

The protein belongs to the TRAFAC class YlqF/YawG GTPase family. RsgA subfamily. Monomer. Associates with 30S ribosomal subunit, binds 16S rRNA. Requires Zn(2+) as cofactor.

The protein localises to the cytoplasm. In terms of biological role, one of several proteins that assist in the late maturation steps of the functional core of the 30S ribosomal subunit. Helps release RbfA from mature subunits. May play a role in the assembly of ribosomal proteins into the subunit. Circularly permuted GTPase that catalyzes slow GTP hydrolysis, GTPase activity is stimulated by the 30S ribosomal subunit. This is Small ribosomal subunit biogenesis GTPase RsgA from Yersinia pseudotuberculosis serotype O:1b (strain IP 31758).